Consider the following 259-residue polypeptide: Ribonuclease T2-B (259 aa).

Positions 1–29 (MAPAEARGALPGWISVLGWGLALCSLCGA) are cleaved as a signal peptide. A disulfide bond links Cys53 and Cys59. The active site involves His69. Cystine bridges form between Cys79/Cys125, Cys188/Cys244, and Cys206/Cys217. N-linked (GlcNAc...) asparagine glycans are attached at residues Asn80 and Asn110. Catalysis depends on residues Glu118 and His122. N-linked (GlcNAc...) asparagine glycosylation occurs at Asn216.

It belongs to the RNase T2 family.

Its subcellular location is the secreted. It localises to the lysosome lumen. The protein resides in the endoplasmic reticulum lumen. The protein localises to the mitochondrion intermembrane space. The catalysed reaction is a ribonucleotidyl-ribonucleotide-RNA + H2O = a 3'-end 3'-phospho-ribonucleotide-RNA + a 5'-end dephospho-ribonucleoside-RNA + H(+). It catalyses the reaction an adenylyl-uridine-RNA = a 3'-end 2',3'-cyclophospho-AMP-RNA + a 5'-end dephospho-uridine-RNA. The enzyme catalyses a guanylyl-uridine-RNA = a 3'-end 2',3'-cyclophospho-GMP-RNA + a 5'-end dephospho-uridine-RNA. Its activity is regulated as follows. Inhibited by Zn(2+) and Cu(2+). Ribonuclease that plays an essential role in innate immune response by recognizing and degrading RNAs from microbial pathogens that are subsequently sensed by TLR8. Cleaves preferentially single-stranded RNA molecules between purine and uridine residues, which critically contributes to the supply of catabolic uridine and the generation of purine-2',3'-cyclophosphate-terminated oligoribonucleotides. In turn, RNase T2 degradation products promote the RNA-dependent activation of TLR8. In plasmacytoid dendritic cells, it cooperates with PLD3 or PLD4 5'-&gt;3' exonucleases to process RNA fragments and release 2',3'-cyclic guanosine monophosphate (2',3'-cGMP), a potent stimulatory ligand for TLR7. Also plays a key role in degradation of mitochondrial RNA and processing of non-coding RNA imported from the cytosol into mitochondria. Participates as well in degradation of mitochondrion-associated cytosolic rRNAs. The polypeptide is Ribonuclease T2-B (Mus musculus (Mouse)).